Consider the following 255-residue polypeptide: tRNA (guanine-N(1)-)-methyltransferase (255 aa).

Residues G113 and I133–L138 contribute to the S-adenosyl-L-methionine site.

It belongs to the RNA methyltransferase TrmD family. As to quaternary structure, homodimer.

Its subcellular location is the cytoplasm. It carries out the reaction guanosine(37) in tRNA + S-adenosyl-L-methionine = N(1)-methylguanosine(37) in tRNA + S-adenosyl-L-homocysteine + H(+). Functionally, specifically methylates guanosine-37 in various tRNAs. This is tRNA (guanine-N(1)-)-methyltransferase from Klebsiella pneumoniae subsp. pneumoniae (strain ATCC 700721 / MGH 78578).